The primary structure comprises 2139 residues: U5 small nuclear ribonucleoprotein 200 kDa helicase (2139 aa).

2 positions are modified to phosphoserine: serine 17 and serine 26. Residues 39-80 (EVLSLVGKLEGTRMGDKAQRTKPQMQEERRAKRRKRDEDRHD) are disordered. Lysine 46 is covalently cross-linked (Glycyl lysine isopeptide (Lys-Gly) (interchain with G-Cter in SUMO2)). Basic and acidic residues predominate over residues 48-80 (EGTRMGDKAQRTKPQMQEERRAKRRKRDEDRHD). Residues 54–84 (DKAQRTKPQMQEERRAKRRKRDEDRHDINKM) adopt a coiled-coil conformation. The residue at position 225 (serine 225) is a Phosphoserine. Threonine 389 carries the post-translational modification Phosphothreonine. Residues 395–2132 (DLDQGGEALA…YKFSVDVKEA (1738 aa)) are interaction with C9orf78 and WBP4. The region spanning 490-673 (RAALETDENL…FLRVDPAKGL (184 aa)) is the Helicase ATP-binding 1 domain. Residue 503–510 (APTGAGKT) coordinates ATP. The DEAH box motif lies at 615–618 (DEIH). A Helicase C-terminal 1 domain is found at 684–921 (PLEQTYVGIT…NAKDAVNWLG (238 aa)). At tyrosine 709 the chain carries Phosphotyrosine. A Glycyl lysine isopeptide (Lys-Gly) (interchain with G-Cter in SUMO) cross-link involves residue lysine 944. N6-acetyllysine; alternate is present on lysine 971. Lysine 971 is covalently cross-linked (Glycyl lysine isopeptide (Lys-Gly) (interchain with G-Cter in SUMO); alternate). Residues 982 to 1289 (TELGRIASHY…SCETQLPVSF (308 aa)) form the SEC63 1 domain. Residues lysine 1071 and lysine 1199 each participate in a glycyl lysine isopeptide (Lys-Gly) (interchain with G-Cter in SUMO) cross-link. The segment at 1285–2139 (LPVSFRHLIL…KEAETDSDSD (855 aa)) is interaction with TSSC4. Residues 1340–1515 (NTVYNSDDNV…WLGCSATSTF (176 aa)) enclose the Helicase ATP-binding 2 domain. 1353–1360 (APTGSGKT) is a binding site for ATP. Phosphothreonine is present on threonine 1431. The DEAH box signature appears at 1457–1460 (DEVH). In terms of domain architecture, Helicase C-terminal 2 spans 1548-1756 (PVYHAITKHS…TIENKQDAVD (209 aa)). Threonine 1768 carries the post-translational modification Phosphothreonine. Residues 1815 to 2127 (PLNLGMIAAY…GCDQEYKFSV (313 aa)) form the SEC63 2 domain. Serine 2005 bears the Phosphoserine mark. Lysine 2094 is covalently cross-linked (Glycyl lysine isopeptide (Lys-Gly) (interchain with G-Cter in SUMO)). Threonine 2134 carries the post-translational modification Phosphothreonine. A phosphoserine mark is found at serine 2136 and serine 2138.

This sequence belongs to the helicase family. SKI2 subfamily. Component of a core complex containing at least PRPF8, SNRNP200, EFTUD2 and SNRNP40. Component of the U5 snRNP and U4/U6-U5 tri-snRNP complexes, building blocks of the spliceosome. Component of the U4/U6-U5 tri-snRNP complex composed of the U4, U6 and U5 snRNAs and at least PRPF3, PRPF4, PRPF6, PRPF8, PRPF31, SNRNP200, TXNL4A, SNRNP40, DDX23, CD2BP2, PPIH, SNU13, EFTUD2, SART1 and USP39. Component of precatalytic, catalytic and postcatalytic spliceosomal complexes. Component of the minor spliceosome, which splices U12-type introns. Interacts with C9orf78; the interaction is direct and mutually exclusive with its interaction with WBP4. Interacts with WBP4; the interaction is mutually exclusive with its interaction with C9orf78. Interacts with PRPF8. Interacts with TSSC4; the interaction is direct, excludes recruitment of C9ORF78 and WBP4 to SNRNP200 and negatively regulates its RNA helicase activity.

Its subcellular location is the nucleus. It carries out the reaction ATP + H2O = ADP + phosphate + H(+). Catalyzes the ATP-dependent unwinding of U4/U6 RNA duplices, an essential step in the assembly of a catalytically active spliceosome. Plays a role in pre-mRNA splicing as core component of precatalytic, catalytic and postcatalytic spliceosomal complexes. As a component of the minor spliceosome, involved in the splicing of U12-type introns in pre-mRNAs. Involved in spliceosome assembly, activation and disassembly. Mediates changes in the dynamic network of RNA-RNA interactions in the spliceosome. This is U5 small nuclear ribonucleoprotein 200 kDa helicase (Snrnp200) from Rattus norvegicus (Rat).